A 1538-amino-acid chain; its full sequence is Phenolphthiocerol/phthiocerol polyketide synthase subunit B (1538 aa).

The Ketosynthase family 3 (KS3) domain maps to 33-455 (AEPVAVVGIG…GTNAHVIIEQ (423 aa)). Residues cysteine 205, histidine 340, and histidine 377 each act as for beta-ketoacyl synthase activity in the active site. Positions 553-882 (DGSPGPGTVF…TNLYTADIAH (330 aa)) are acyltransferase. The active-site For malonyltransferase activity is serine 649. 1153–1196 (SQLVIGATGNIGPHLIRQLARMGAKTIVAMARKPGALDELTQCL) is an NADP(+) binding site. Residues 1153–1328 (SQLVIGATGN…TVVDWGLWKS (176 aa)) are beta-ketoacyl reductase. Positions 1423-1498 (DMLFDHVGAL…SLTDYLATVL (76 aa)) constitute a Carrier domain. At serine 1458 the chain carries O-(pantetheine 4'-phosphoryl)serine.

NADP(+) serves as cofactor. Requires pantetheine 4'-phosphate as cofactor.

The catalysed reaction is icosanoyl-[(phenol)carboxyphthiodiolenone synthase] + 2 (S)-methylmalonyl-CoA + 3 malonyl-CoA + 5 NADPH + 10 H(+) = C32-carboxyphthiodiolenone-[(phenol)carboxyphthiodiolenone synthase] + 5 CO2 + 5 NADP(+) + 5 CoA + 2 H2O. The enzyme catalyses docosanoyl-[(phenol)carboxyphthiodiolenone synthase] + 2 (S)-methylmalonyl-CoA + 3 malonyl-CoA + 5 NADPH + 10 H(+) = C34-carboxyphthiodiolenone-[(phenol)carboxyphthiodiolenone synthase] + 5 CO2 + 5 NADP(+) + 5 CoA + 2 H2O. It carries out the reaction 17-(4-hydroxyphenyl)heptadecanoyl-[(phenol)carboxyphthiodiolenone synthase] + 2 (S)-methylmalonyl-CoA + 3 malonyl-CoA + 5 NADPH + 10 H(+) = C35-(phenol)carboxyphthiodiolenone-[(phenol)carboxyphthiodiolenone synthase] + 5 CO2 + 5 NADP(+) + 5 CoA + 2 H2O. It catalyses the reaction 19-(4-hydroxyphenyl)nonadecanoyl-[(phenol)carboxyphthiodiolenone synthase] + 2 (S)-methylmalonyl-CoA + 3 malonyl-CoA + 5 NADPH + 10 H(+) = C37-(phenol)carboxyphthiodiolenone-[(phenol)carboxyphthiodiolenone synthase] + 5 CO2 + 5 NADP(+) + 5 CoA + 2 H2O. It functions in the pathway lipid metabolism; fatty acid biosynthesis. Its function is as follows. Part of the PpsABCDE complex involved in the biosynthesis of the lipid core common to phthiocerols and phenolphthiocerols by successive additions of malonyl-CoA or methylmalonyl-CoA extender units. PpsA can accept as substrate the activated forms of either icosanoyl (C20), docosanoyl (C22) or lignoceroyl (C24) groups from FadD26, or a (4-hydroxyphenyl)-C17 or (4-hydroxyphenyl)-C19 fatty acyl from FadD29. PpsA initiates the biosynthesis and extends its substrate using a malonyl-CoA extender unit. The PpsB and PpsC proteins add the second and third malonyl-CoA extender units. PpsD adds an (R)-methylmalonyl unit and PpsE adds a second (R)-methylmalonyl unit. The incorporation of the methylmalonyl units results in formation of two branched methyl groups in the elongated product. The polypeptide is Phenolphthiocerol/phthiocerol polyketide synthase subunit B (ppsB) (Mycobacterium bovis (strain ATCC BAA-935 / AF2122/97)).